The primary structure comprises 203 residues: MPTIDIESAIWNSGYENIACCDEVGRGCLFGSVLAAAVIMPKDVIIDGVKDSKKLSHKKREQLYEIIKEKSLAIGVGTVSSEIIDKINIKNATRLAMKKAILSLKDKDGNIVAPDYILIDAEEIDVPTPQSAVIKGDDLCHGIAAASIVAKVLRDRLCQRWEEEHPNYGIGQNKGYGTKAHREALKEHGPSPMHRKSFLNKIL.

The RNase H type-2 domain maps to 16-203 (ENIACCDEVG…HRKSFLNKIL (188 aa)). Residues Asp22, Glu23, and Asp120 each coordinate a divalent metal cation.

It belongs to the RNase HII family. Mn(2+) is required as a cofactor. The cofactor is Mg(2+).

It is found in the cytoplasm. The enzyme catalyses Endonucleolytic cleavage to 5'-phosphomonoester.. Endonuclease that specifically degrades the RNA of RNA-DNA hybrids. The polypeptide is Ribonuclease HII (Alkaliphilus oremlandii (strain OhILAs) (Clostridium oremlandii (strain OhILAs))).